We begin with the raw amino-acid sequence, 233 residues long: Leucyl/phenylalanyl-tRNA--protein transferase (233 aa).

It belongs to the L/F-transferase family.

The protein resides in the cytoplasm. The catalysed reaction is N-terminal L-lysyl-[protein] + L-leucyl-tRNA(Leu) = N-terminal L-leucyl-L-lysyl-[protein] + tRNA(Leu) + H(+). The enzyme catalyses N-terminal L-arginyl-[protein] + L-leucyl-tRNA(Leu) = N-terminal L-leucyl-L-arginyl-[protein] + tRNA(Leu) + H(+). It catalyses the reaction L-phenylalanyl-tRNA(Phe) + an N-terminal L-alpha-aminoacyl-[protein] = an N-terminal L-phenylalanyl-L-alpha-aminoacyl-[protein] + tRNA(Phe). Its function is as follows. Functions in the N-end rule pathway of protein degradation where it conjugates Leu, Phe and, less efficiently, Met from aminoacyl-tRNAs to the N-termini of proteins containing an N-terminal arginine or lysine. In Anaeromyxobacter dehalogenans (strain 2CP-1 / ATCC BAA-258), this protein is Leucyl/phenylalanyl-tRNA--protein transferase.